Here is a 520-residue protein sequence, read N- to C-terminus: Ribonuclease Y (520 aa).

Residues 5-25 traverse the membrane as a helical segment; it reads ITIISSLLFLIVGLVVGSLIF. Positions 76–127 are disordered; that stretch reads ELRGRRTETQKAENRLLQREENLDRKDTSLSKREATLERKEESISKRQQQIE. The 64-residue stretch at 210–273 folds into the KH domain; the sequence is TVSVVTLPND…EIARIALEKL (64 aa). The HD domain maps to 336–429; the sequence is VLNHSLEVSK…VAAADALSAA (94 aa).

The protein belongs to the RNase Y family.

It localises to the cell membrane. Endoribonuclease that initiates mRNA decay. This is Ribonuclease Y from Listeria monocytogenes serotype 1/2a (strain 10403S).